A 160-amino-acid chain; its full sequence is Transcription antitermination protein NusB (160 aa).

This sequence belongs to the NusB family.

Involved in transcription antitermination. Required for transcription of ribosomal RNA (rRNA) genes. Binds specifically to the boxA antiterminator sequence of the ribosomal RNA (rrn) operons. The sequence is that of Transcription antitermination protein NusB from Maricaulis maris (strain MCS10) (Caulobacter maris).